The following is an 801-amino-acid chain: MNQPTSRSGLTTFTVIIIGLLALFLLIGGIWLATLGGSIYYIIAGVLLLIVAWQLYKRASTALWFYAALMLGTIIWSVWEVGTDFWALAPRLDILGILGLWLLVPAVTRGINNLGSSKVALSSTLAIAIVLMVYSIFNDPQEINGEIKTPQPETAQAVPGVAESDWPAYGRTQAGVRYSPLKQINDQNVKDLKVAWTLRTGDLKTDNDSGETTNQVTPIKIGNNMFICTAHQQLIAIDPATGKEKWRFDPKLKTDKSFQHLTCRGVMYYDANNTTEFATSLQSKKSSSTQCPRKVFVPVNDGRLVAVNADTGKACTDFGQNGQVNLQEFMPYAYPGGYNPTSPGIVTGSTVVIAGSVTDNYSNKEPSGVIRGYDVNTGKLLWVFDTGAADPNAMPGEGTTFVHNSPNAWAPLAYDAKLDIVYVPTGVGTPDIWGGDRTELKERYANSMLAINASTGKLVWNFQTTHHDLWDMDVPSQPSLADIKNKAGQTVPAIYVLTKTGNAFVLDRRNGQPIVPVTEKPVPQTVKRGPQTKGEFYSKTQPFSDLNLAPQDKLTDKDMWGATMLDQLMCRVSFKRLNYDGIYTPPSENGTLVFPGNLGVFEWGGMSVNPDRQVAVMNPIGLPFVSRLIPADPNRAQTAKGAGTEQGVQPMYGVPYGVEISAFLSPLGLPCKQPAWGYVAGVDLKTHEVVWKKRIGTIRDSLPNLFQLPAVKIGVPGLGGSISTAGNVMFVGATQDNYLRAFNVTNGKKLWEARLPAGGQATPMTYEINGKQYVVIMAGGHGSFGTKMGDYLVAYALPDNK.

The first 33 residues, 1–33 (MNQPTSRSGLTTFTVIIIGLLALFLLIGGIWLA), serve as a signal peptide directing secretion. A run of 4 helical transmembrane segments spans residues 39–55 (IYYI…AWQL), 59–79 (ASTA…WSVW), 94–108 (ILGI…PAVT), and 119–138 (VALS…SIFN). Residue D471 is the Proton acceptor of the active site.

This sequence belongs to the bacterial PQQ dehydrogenase family. In terms of assembly, monomer. It depends on pyrroloquinoline quinone as a cofactor.

The protein resides in the cell inner membrane. It catalyses the reaction D-glucose + A = D-glucono-1,5-lactone + AH2. Functionally, catalyzes an exceptionally high rate of oxidation of a wide range of aldose sugars, including D-glucose, galactose, arabinose and xylose, and also the disaccharides lactose, cellobiose and maltose. The sequence is that of Quinoprotein glucose dehydrogenase A (gdhA) from Acinetobacter calcoaceticus.